The chain runs to 311 residues: Pyrimidine-specific ribonucleoside hydrolase RihA (311 aa).

H240 is an active-site residue.

This sequence belongs to the IUNH family. RihA subfamily.

Its function is as follows. Hydrolyzes cytidine or uridine to ribose and cytosine or uracil, respectively. The protein is Pyrimidine-specific ribonucleoside hydrolase RihA of Salmonella newport (strain SL254).